Here is a 139-residue protein sequence, read N- to C-terminus: MGGGERYNIPAPQTRNVSKNQQQLSRQKTKDQNSQMKIVHKKKERGHTYNSSSAAWQAMQNGGKNKNFPNNQNWNSSLSSPTLLFKSQTNQNYAGAKFSEPPSPSVLPKPPSHWVPVSFNPSDKEIMTFQLKTLLKVQV.

Residues M1–P111 are disordered. 2 stretches are compositionally biased toward polar residues: residues A11–M36 and T48–M59. Residues Q60–N75 show a composition bias toward low complexity. The span at S76–Y93 shows a compositional bias: polar residues. The short motif at S99 to S105 is the SH3-binding element. Pro residues predominate over residues P101–P111.

Belongs to the PNRC family. PNRC2 subfamily. Interacts with UPF1/RENT1; preferentially interacts with hyperphosphorylated form. Interacts with DCP1A. Interacts with many nuclear receptors including ESR1, ESRRA, ESRRG, NR3C1/GR, NR5A1, PGR, TR, RAR and RXR.

The protein resides in the nucleus. It is found in the cytoplasm. It localises to the P-body. In terms of biological role, involved in nonsense-mediated mRNA decay (NMD) by acting as a bridge between the mRNA decapping complex and the NMD machinery. May act by targeting the NMD machinery to the P-body and recruiting the decapping machinery to aberrant mRNAs. Required for UPF1/RENT1 localization to the P-body. Plays a role in glucocorticoid receptor-mediated mRNA degradation by interacting with the glucocorticoid receptor NR3C1 in a ligand-dependent manner when it is bound to the 5' UTR of target mRNAs and recruiting the RNA helicase UPF1 and the mRNA-decapping enzyme DCP1A, leading to RNA decay. Also acts as a nuclear receptor coactivator. May play a role in controlling the energy balance between energy storage and energy expenditure. The polypeptide is Proline-rich nuclear receptor coactivator 2 (PNRC2) (Bos taurus (Bovine)).